The following is a 196-amino-acid chain: Putative NADH dehydrogenase/NAD(P)H nitroreductase XCV0587 (196 aa).

It belongs to the nitroreductase family. HadB/RutE subfamily. FMN serves as cofactor.

This chain is Putative NADH dehydrogenase/NAD(P)H nitroreductase XCV0587, found in Xanthomonas euvesicatoria pv. vesicatoria (strain 85-10) (Xanthomonas campestris pv. vesicatoria).